The primary structure comprises 205 residues: Large ribosomal subunit protein uL18 (205 aa).

Belongs to the universal ribosomal protein uL18 family. As to quaternary structure, part of the 50S ribosomal subunit. Contacts the 5S and 23S rRNAs.

Functionally, this is one of the proteins that bind and probably mediate the attachment of the 5S RNA into the large ribosomal subunit, where it forms part of the central protuberance. The sequence is that of Large ribosomal subunit protein uL18 from Pyrobaculum islandicum (strain DSM 4184 / JCM 9189 / GEO3).